The following is a 553-amino-acid chain: ATP synthase F(1) complex subunit alpha, mitochondrial (553 aa).

Residues 1–43 constitute a mitochondrion transit peptide; sequence MLSVRVAAAVARALPRRAGLVSKNALGSSFIAARNLHASNSRL. A Pyrrolidone carboxylic acid modification is found at glutamine 44. 2 positions are modified to phosphoserine: serine 53 and serine 65. Serine 76 is subject to Phosphoserine; alternate. O-linked (GlcNAc) serine; alternate glycosylation is present at serine 76. The residue at position 106 (serine 106) is a Phosphoserine. An N6-acetyllysine mark is found at lysine 123, lysine 126, and lysine 132. At threonine 134 the chain carries Phosphothreonine. Lysine 161 carries the post-translational modification N6-acetyllysine; alternate. Position 161 is an N6-succinyllysine; alternate (lysine 161). Serine 166 is subject to Phosphoserine. Residue lysine 167 is modified to N6-acetyllysine; alternate. The residue at position 167 (lysine 167) is an N6-succinyllysine; alternate. The residue at position 184 (serine 184) is a Phosphoserine. At arginine 204 the chain carries Omega-N-methylarginine. Glutamine 215, glycine 217, lysine 218, threonine 219, and serine 220 together coordinate ATP. Threonine 219 serves as a coordination point for Mg(2+). 2 positions are modified to N6-acetyllysine; alternate: lysine 230 and lysine 239. Residues lysine 230 and lysine 239 each carry the N6-succinyllysine; alternate modification. An N6-acetyllysine modification is found at lysine 240. Residues lysine 261 and lysine 305 each carry the N6-acetyllysine; alternate modification. Residues lysine 261 and lysine 305 each carry the N6-succinyllysine; alternate modification. Residue aspartate 312 participates in Mg(2+) binding. Lysine 427 carries the N6-acetyllysine; alternate modification. N6-succinyllysine; alternate is present on lysine 427. Lysine 434 carries the post-translational modification N6-acetyllysine. ATP is bound by residues glutamine 473 and glutamine 475. Residues lysine 498, lysine 506, lysine 531, and lysine 539 each carry the N6-acetyllysine; alternate modification. N6-succinyllysine; alternate is present on residues lysine 498, lysine 506, lysine 531, and lysine 539. Position 541 is an N6-acetyllysine (lysine 541).

The protein belongs to the ATPase alpha/beta chains family. As to quaternary structure, homotrimer. Component of the ATP synthase complex composed at least of ATP5F1A/subunit alpha, ATP5F1B/subunit beta, ATP5MC1/subunit c (homooctomer), MT-ATP6/subunit a, MT-ATP8/subunit 8, ATP5ME/subunit e, ATP5MF/subunit f, ATP5MG/subunit g, ATP5MK/subunit k, ATP5MJ/subunit j, ATP5F1C/subunit gamma, ATP5F1D/subunit delta, ATP5F1E/subunit epsilon, ATP5PF/subunit F6, ATP5PB/subunit b, ATP5PD/subunit d, ATP5PO/subunit OSCP. ATP synthase complex consists of a soluble F(1) head domain (subunits alpha(3) and beta(3)) - the catalytic core - and a membrane F(0) domain - the membrane proton channel (subunits c, a, 8, e, f, g, k and j). These two domains are linked by a central stalk (subunits gamma, delta, and epsilon) rotating inside the F1 region and a stationary peripheral stalk (subunits F6, b, d, and OSCP). Interacts with ATPAF2. Interacts with HRG; the interaction occurs on the surface of T-cells and alters the cell morphology when associated with concanavalin (in vitro). Interacts with PLG (angiostatin peptide); the interaction inhibits most of the angiogenic properties of angiostatin. Interacts with BLOC1S1. Interacts with BCL2L1 isoform BCL-X(L); the interaction mediates the association of BCL2L1 isoform BCL-X(L) with the mitochondrial membrane F(1)F(0) ATP synthase and enhances neurons metabolic efficiency. Interacts with CLN5 and PPT1. Interacts with S100A1; this interaction increases F1-ATPase activity. Interacts with ABCB7; this interaction allows the regulation of cellular iron homeostasis and cellular reactive oxygen species (ROS) levels in cardiomyocytes. In terms of processing, acetylated on lysine residues. BLOC1S1 is required for acetylation. As to expression, heart muscle (at protein level). Heart and liver.

It localises to the mitochondrion inner membrane. The protein localises to the cell membrane. In terms of biological role, subunit alpha, of the mitochondrial membrane ATP synthase complex (F(1)F(0) ATP synthase or Complex V) that produces ATP from ADP in the presence of a proton gradient across the membrane which is generated by electron transport complexes of the respiratory chain. ATP synthase complex consist of a soluble F(1) head domain - the catalytic core - and a membrane F(1) domain - the membrane proton channel. These two domains are linked by a central stalk rotating inside the F(1) region and a stationary peripheral stalk. During catalysis, ATP synthesis in the catalytic domain of F(1) is coupled via a rotary mechanism of the central stalk subunits to proton translocation. In vivo, can only synthesize ATP although its ATP hydrolase activity can be activated artificially in vitro. With the catalytic subunit beta (ATP5F1B), forms the catalytic core in the F(1) domain. Subunit alpha does not bear the catalytic high-affinity ATP-binding sites. The polypeptide is ATP synthase F(1) complex subunit alpha, mitochondrial (Bos taurus (Bovine)).